The primary structure comprises 173 residues: Dual-action ribosomal maturation protein DarP (173 aa).

It belongs to the DarP family.

It is found in the cytoplasm. Its function is as follows. Member of a network of 50S ribosomal subunit biogenesis factors which assembles along the 30S-50S interface, preventing incorrect 23S rRNA structures from forming. Promotes peptidyl transferase center (PTC) maturation. The protein is Dual-action ribosomal maturation protein DarP of Pseudomonas entomophila (strain L48).